Consider the following 365-residue polypeptide: tRNA 2-selenouridine synthase (365 aa).

The 124-residue stretch at 15–138 (FIAGQPLIDL…MRQYLIGVIE (124 aa)) folds into the Rhodanese domain. Catalysis depends on cysteine 98, which acts as the S-selanylcysteine intermediate.

This sequence belongs to the SelU family. As to quaternary structure, monomer.

The enzyme catalyses 5-methylaminomethyl-2-thiouridine(34) in tRNA + selenophosphate + (2E)-geranyl diphosphate + H2O + H(+) = 5-methylaminomethyl-2-selenouridine(34) in tRNA + (2E)-thiogeraniol + phosphate + diphosphate. The catalysed reaction is 5-methylaminomethyl-2-thiouridine(34) in tRNA + (2E)-geranyl diphosphate = 5-methylaminomethyl-S-(2E)-geranyl-thiouridine(34) in tRNA + diphosphate. It catalyses the reaction 5-methylaminomethyl-S-(2E)-geranyl-thiouridine(34) in tRNA + selenophosphate + H(+) = 5-methylaminomethyl-2-(Se-phospho)selenouridine(34) in tRNA + (2E)-thiogeraniol. It carries out the reaction 5-methylaminomethyl-2-(Se-phospho)selenouridine(34) in tRNA + H2O = 5-methylaminomethyl-2-selenouridine(34) in tRNA + phosphate. In terms of biological role, involved in the post-transcriptional modification of the uridine at the wobble position (U34) of tRNA(Lys), tRNA(Glu) and tRNA(Gln). Catalyzes the conversion of 2-thiouridine (S2U-RNA) to 2-selenouridine (Se2U-RNA). Acts in a two-step process involving geranylation of 2-thiouridine (S2U) to S-geranyl-2-thiouridine (geS2U) and subsequent selenation of the latter derivative to 2-selenouridine (Se2U) in the tRNA chain. This is tRNA 2-selenouridine synthase from Shewanella sp. (strain ANA-3).